Consider the following 429-residue polypeptide: Histidine--tRNA ligase (429 aa).

Belongs to the class-II aminoacyl-tRNA synthetase family. As to quaternary structure, homodimer.

It localises to the cytoplasm. The catalysed reaction is tRNA(His) + L-histidine + ATP = L-histidyl-tRNA(His) + AMP + diphosphate + H(+). The polypeptide is Histidine--tRNA ligase (Dechloromonas aromatica (strain RCB)).